Consider the following 299-residue polypeptide: MFNNNRIRIAMQKTGRLSSDSIKLLTSCGIKINLKQQKLIAFAENMPIDAMLVRDDDIPGLVMDGVVDLGIVGENVLEEERLNRISQNSEHSYVTLTRLDFGICRLSLAVPVNTTYTHINSLKNIRIATSYPHLLKKYLDKKNISFKSCMLNGSVEVAPRAGLADAICDLVSTGATLEANGLREVQVVYRSRACLISKNGDINTDKKEVINKLMTRIKGVIKARESKYIMLHAPINKLEEVISLLHGAERPTVLKLAGDDNRVAMHMVSSETLFWETMEKLKALGASSILVLPIEKMME.

It belongs to the ATP phosphoribosyltransferase family. Long subfamily. As to quaternary structure, equilibrium between an active dimeric form, an inactive hexameric form and higher aggregates. Interconversion between the various forms is largely reversible and is influenced by the natural substrates and inhibitors of the enzyme. Mg(2+) serves as cofactor.

Its subcellular location is the cytoplasm. It catalyses the reaction 1-(5-phospho-beta-D-ribosyl)-ATP + diphosphate = 5-phospho-alpha-D-ribose 1-diphosphate + ATP. The protein operates within amino-acid biosynthesis; L-histidine biosynthesis; L-histidine from 5-phospho-alpha-D-ribose 1-diphosphate: step 1/9. Feedback inhibited by histidine. Catalyzes the condensation of ATP and 5-phosphoribose 1-diphosphate to form N'-(5'-phosphoribosyl)-ATP (PR-ATP). Has a crucial role in the pathway because the rate of histidine biosynthesis seems to be controlled primarily by regulation of HisG enzymatic activity. The polypeptide is ATP phosphoribosyltransferase (Buchnera aphidicola subsp. Diuraphis noxia).